The following is a 176-amino-acid chain: Parathyroid hormone-related protein (176 aa).

The first 25 residues, 1-25 (MMFTKLFQQWSFAVFLLSYSVPSYG), serve as a signal peptide directing secretion. Positions 26-37 (RSVEGISRRLKR) are excised as a propeptide. The tract at residues 58–69 (RIFLQNLIEGVN) is important for receptor binding. Residues 76-157 (TSEVSPNPKP…WLNSGMYGSN (82 aa)) are disordered. Composition is skewed to polar residues over residues 77 to 91 (SEVSPNPKPATNTKN) and 106 to 116 (TQETNKSQTYK). A Nuclear localization signal motif is present at residues 109–130 (TNKSQTYKEQPLKVSGKKKKAK). A compositionally biased stretch (basic residues) spans 123-133 (SGKKKKAKPGK).

Belongs to the parathyroid hormone family.

It localises to the secreted. The protein localises to the cytoplasm. It is found in the nucleus. Its function is as follows. Neuroendocrine peptide which is a critical regulator of cellular and organ growth, development, migration, differentiation and survival and of epithelial calcium ion transport. Acts by binding to its receptor, PTH1R, activating G protein-coupled receptor signaling. Regulates endochondral bone development and epithelial-mesenchymal interactions during the formation of the mammary glands and teeth. Required for skeletal homeostasis. Potent inhibitor of osteoclastic bone resorption. In Gallus gallus (Chicken), this protein is Parathyroid hormone-related protein (PTHLH).